We begin with the raw amino-acid sequence, 839 residues long: MPRLDVEKTIEELSLGEKVALTAGIDFWHTASVPRLNIPTLRMSDGPNGVRGTRFFNGVPAACFPCATALGATWDTELLHEIGQLMGEESIAKGSHIILGPTINTQRSPLGGRGFESFAEDGVLSGLLAGYISKGIQEKGVAATLKHFVCNDQEHQRMAVDSIVTQRALREIYLLPFQLAMRICRTACVMTAYNKVNGTHVSQNKEIITDILRKEWGWDGLVMSDWFGTYSTSDAINAGLDLEMPGKTRWRGTALAHAVSSNEVAEFVMDERVRNVLNLVNFVDGLNIPENAPEKALNRPQDQALLRRAAAESVVLMKNEEDILPLKKEKSILVIGPNSKVAAYCGGGSASLDAYYTVTPFEGVSAQSKGEVKFSQGVYSHKDLPLLGPLLKTADGKTGFSFKVYNEHPSESNRELIEQLHLVSSSGFLMDYVNPKIKSLTYYVDMEGLFTPEEDGVYDFGVTVVGTGQLFIDGELVVDNTKNQRQGSAFFGSATVEEKGSKELKAGQTYKVLFQFGTAPTSDLDTRGVVVFGPGGFRFGASRRVGQEELISNAVKLASEAEQVVVFAGLTSEWETEGYDRDHMDLPPGSDEMISRVLDVNPNAVVVIQSGTPVTMPWANKTKALLHAWFGGNECGNGIADVLYGDVNPSGKLPITFPVRLQDNPSYVNFRSERGRVLYGEDVYVGYRYYEKVDLAPLFPFGHGLSYTTFTRSDLTLTTTPEKPQYEESGEPITATVTVTNTGKVAGAEIVQLWVAPPATEVNRPVRELKGFTKVFLQPGEQKKVEIVVEKKLATSWFDEMREKWASEKGEYEVLVTGTGEGVLKSSFKVEKTRYWLGL.

The N-linked (GlcNAc...) asparagine glycan is linked to Asn-197. Asp-225 is a catalytic residue. The PA14 domain maps to 395-555 (DGKTGFSFKV…GQEELISNAV (161 aa)). N-linked (GlcNAc...) asparagine glycosylation occurs at Asn-620.

Belongs to the glycosyl hydrolase 3 family.

Its subcellular location is the secreted. The enzyme catalyses Hydrolysis of terminal, non-reducing beta-D-glucosyl residues with release of beta-D-glucose.. Its pathway is glycan metabolism; cellulose degradation. Beta-glucosidases are one of a number of cellulolytic enzymes involved in the degradation of cellulosic biomass. Catalyzes the last step releasing glucose from the inhibitory cellobiose. This Aspergillus oryzae (strain ATCC 42149 / RIB 40) (Yellow koji mold) protein is Probable beta-glucosidase I (bglI).